A 259-amino-acid polypeptide reads, in one-letter code: ATP synthase subunit a (259 aa).

The next 6 helical transmembrane spans lie at 37-57 (LSIT…FLFM), 101-121 (YFPA…LGLI), 131-151 (LVVT…LAIV), 157-177 (FIGF…MVPI), 203-223 (VLAI…LMPA), and 232-252 (FELF…CVYI).

The protein belongs to the ATPase A chain family. As to quaternary structure, F-type ATPases have 2 components, CF(1) - the catalytic core - and CF(0) - the membrane proton channel. CF(1) has five subunits: alpha(3), beta(3), gamma(1), delta(1), epsilon(1). CF(0) has three main subunits: a(1), b(2) and c(9-12). The alpha and beta chains form an alternating ring which encloses part of the gamma chain. CF(1) is attached to CF(0) by a central stalk formed by the gamma and epsilon chains, while a peripheral stalk is formed by the delta and b chains.

It is found in the cell inner membrane. Key component of the proton channel; it plays a direct role in the translocation of protons across the membrane. The chain is ATP synthase subunit a from Magnetococcus marinus (strain ATCC BAA-1437 / JCM 17883 / MC-1).